The primary structure comprises 388 residues: Probable Na(+)/H(+) antiporter 3 (388 aa).

12 consecutive transmembrane segments (helical) span residues 2-22 (ESYY…PNLL), 27-47 (IPAI…GLNI), 53-73 (TLKI…GLEV), 81-101 (EFKN…VGGY), 102-122 (LIGQ…VIFA), 146-166 (IILS…SVVI), 175-195 (VGTF…AIPS), 215-235 (VLFI…HPIV), 263-283 (AIGY…ETNI), 294-314 (LLLI…FIAL), 325-345 (TIGG…ASIG), and 354-374 (EIFV…PIVV).

This sequence belongs to the monovalent cation:proton antiporter 1 (CPA1) transporter (TC 2.A.36) family.

It localises to the cell membrane. This is probably a Na(+)/H(+) antiporter. This is Probable Na(+)/H(+) antiporter 3 from Methanocaldococcus jannaschii (strain ATCC 43067 / DSM 2661 / JAL-1 / JCM 10045 / NBRC 100440) (Methanococcus jannaschii).